We begin with the raw amino-acid sequence, 37 residues long: Large ribosomal subunit protein bL36c (37 aa).

Belongs to the bacterial ribosomal protein bL36 family.

It is found in the plastid. It localises to the chloroplast. The polypeptide is Large ribosomal subunit protein bL36c (rpl36) (Cyanidium caldarium (Red alga)).